A 384-amino-acid chain; its full sequence is Dual-specificity RNA methyltransferase RlmN (384 aa).

E105 acts as the Proton acceptor in catalysis. The 240-residue stretch at 111 to 350 (EVDRATLCVS…TIVRKTRGDD (240 aa)) folds into the Radical SAM core domain. The cysteines at positions 118 and 355 are disulfide-linked. [4Fe-4S] cluster-binding residues include C125, C129, and C132. S-adenosyl-L-methionine-binding positions include 179–180 (GE), S211, 233–235 (SLH), and N312. C355 serves as the catalytic S-methylcysteine intermediate.

The protein belongs to the radical SAM superfamily. RlmN family. The cofactor is [4Fe-4S] cluster.

The protein resides in the cytoplasm. It catalyses the reaction adenosine(2503) in 23S rRNA + 2 reduced [2Fe-2S]-[ferredoxin] + 2 S-adenosyl-L-methionine = 2-methyladenosine(2503) in 23S rRNA + 5'-deoxyadenosine + L-methionine + 2 oxidized [2Fe-2S]-[ferredoxin] + S-adenosyl-L-homocysteine. The catalysed reaction is adenosine(37) in tRNA + 2 reduced [2Fe-2S]-[ferredoxin] + 2 S-adenosyl-L-methionine = 2-methyladenosine(37) in tRNA + 5'-deoxyadenosine + L-methionine + 2 oxidized [2Fe-2S]-[ferredoxin] + S-adenosyl-L-homocysteine. Functionally, specifically methylates position 2 of adenine 2503 in 23S rRNA and position 2 of adenine 37 in tRNAs. m2A2503 modification seems to play a crucial role in the proofreading step occurring at the peptidyl transferase center and thus would serve to optimize ribosomal fidelity. The sequence is that of Dual-specificity RNA methyltransferase RlmN from Escherichia coli O9:H4 (strain HS).